Reading from the N-terminus, the 78-residue chain is Acyl carrier protein (78 aa).

Positions 1 to 76 constitute a Carrier domain; sequence MAIHPKVKDI…DVASYLEKKG (76 aa). S36 bears the O-(pantetheine 4'-phosphoryl)serine mark.

It belongs to the acyl carrier protein (ACP) family. Post-translationally, 4'-phosphopantetheine is transferred from CoA to a specific serine of apo-ACP by AcpS. This modification is essential for activity because fatty acids are bound in thioester linkage to the sulfhydryl of the prosthetic group.

It localises to the cytoplasm. Its pathway is lipid metabolism; fatty acid biosynthesis. In terms of biological role, carrier of the growing fatty acid chain in fatty acid biosynthesis. This is Acyl carrier protein from Bdellovibrio bacteriovorus (strain ATCC 15356 / DSM 50701 / NCIMB 9529 / HD100).